Reading from the N-terminus, the 303-residue chain is Oxygen-dependent coproporphyrinogen-III oxidase (303 aa).

Residue Ser93 coordinates substrate. A divalent metal cation is bound by residues His97 and His107. The active-site Proton donor is the His107. 109–111 (NVR) is a binding site for substrate. A divalent metal cation contacts are provided by His146 and His176. The important for dimerization stretch occupies residues 241–276 (YVEFNLVYDRGTLFGLQSGGRTESILMSLPPQVRWG). Residue 259–261 (GGR) participates in substrate binding.

This sequence belongs to the aerobic coproporphyrinogen-III oxidase family. Homodimer. It depends on a divalent metal cation as a cofactor.

It localises to the cytoplasm. It catalyses the reaction coproporphyrinogen III + O2 + 2 H(+) = protoporphyrinogen IX + 2 CO2 + 2 H2O. The protein operates within porphyrin-containing compound metabolism; protoporphyrin-IX biosynthesis; protoporphyrinogen-IX from coproporphyrinogen-III (O2 route): step 1/1. Functionally, involved in the heme biosynthesis. Catalyzes the aerobic oxidative decarboxylation of propionate groups of rings A and B of coproporphyrinogen-III to yield the vinyl groups in protoporphyrinogen-IX. This chain is Oxygen-dependent coproporphyrinogen-III oxidase, found in Pseudomonas putida (strain GB-1).